The primary structure comprises 146 residues: Snaclec echicetin subunit beta (146 aa).

Positions 1-23 are cleaved as a signal peptide; the sequence is MGRFISVSFGLLVLLLSLSGTGA. Intrachain disulfides connect cysteine 25-cysteine 36, cysteine 53-cysteine 142, and cysteine 119-cysteine 134. The C-type lectin domain occupies 32–143; the sequence is YEGYCYKVFK…CTWTFSFVCK (112 aa).

Belongs to the snaclec family. In terms of assembly, heterodimer of subunits alpha and beta; disulfide-linked. As to expression, expressed by the venom gland.

Its subcellular location is the secreted. Binding of echicetin to glycoprotein Ibalpha (GP1BA) receptor on platelets alone results in inhibition of platelet aggregation, while binding to both GPIba receptor and IgMk promotes platelet aggregation and signal transduction. The chain is Snaclec echicetin subunit beta from Echis carinatus (Saw-scaled viper).